The primary structure comprises 144 residues: Large ribosomal subunit protein uL11 (144 aa).

It belongs to the universal ribosomal protein uL11 family. In terms of assembly, part of the ribosomal stalk of the 50S ribosomal subunit. Interacts with L10 and the large rRNA to form the base of the stalk. L10 forms an elongated spine to which L12 dimers bind in a sequential fashion forming a multimeric L10(L12)X complex. One or more lysine residues are methylated.

Forms part of the ribosomal stalk which helps the ribosome interact with GTP-bound translation factors. This is Large ribosomal subunit protein uL11 from Parafrankia sp. (strain EAN1pec).